The primary structure comprises 297 residues: Phosphatidylglycerol--prolipoprotein diacylglyceryl transferase (297 aa).

4 helical membrane-spanning segments follow: residues Phe-20–Val-40, Ile-50–Ala-70, Ala-105–Ile-125, and Ile-133–Gly-153. Arg-154 provides a ligand contact to a 1,2-diacyl-sn-glycero-3-phospho-(1'-sn-glycerol). A run of 3 helical transmembrane segments spans residues Pro-193 to Phe-213, Gly-225 to Leu-245, and Ala-266 to Leu-286.

Belongs to the Lgt family.

It is found in the cell inner membrane. It catalyses the reaction L-cysteinyl-[prolipoprotein] + a 1,2-diacyl-sn-glycero-3-phospho-(1'-sn-glycerol) = an S-1,2-diacyl-sn-glyceryl-L-cysteinyl-[prolipoprotein] + sn-glycerol 1-phosphate + H(+). The protein operates within protein modification; lipoprotein biosynthesis (diacylglyceryl transfer). Its function is as follows. Catalyzes the transfer of the diacylglyceryl group from phosphatidylglycerol to the sulfhydryl group of the N-terminal cysteine of a prolipoprotein, the first step in the formation of mature lipoproteins. This chain is Phosphatidylglycerol--prolipoprotein diacylglyceryl transferase, found in Prochlorococcus marinus (strain MIT 9312).